The following is a 356-amino-acid chain: 1-deoxy-D-xylulose 5-phosphate reductoisomerase (356 aa).

NADPH is bound by residues Thr7, Gly8, Ser9, Ile10, Gly31, Asn33, and Asn111. A 1-deoxy-D-xylulose 5-phosphate-binding site is contributed by Lys112. Glu113 contacts NADPH. A Mn(2+)-binding site is contributed by Asp131. 1-deoxy-D-xylulose 5-phosphate is bound by residues Ser132, Glu133, Ser155, and His178. Position 133 (Glu133) interacts with Mn(2+). Gly184 lines the NADPH pocket. 4 residues coordinate 1-deoxy-D-xylulose 5-phosphate: Ser191, Asn196, Lys197, and Glu200. Glu200 provides a ligand contact to Mn(2+).

This sequence belongs to the DXR family. Mg(2+) serves as cofactor. The cofactor is Mn(2+).

It catalyses the reaction 2-C-methyl-D-erythritol 4-phosphate + NADP(+) = 1-deoxy-D-xylulose 5-phosphate + NADPH + H(+). The protein operates within isoprenoid biosynthesis; isopentenyl diphosphate biosynthesis via DXP pathway; isopentenyl diphosphate from 1-deoxy-D-xylulose 5-phosphate: step 1/6. Its function is as follows. Catalyzes the NADPH-dependent rearrangement and reduction of 1-deoxy-D-xylulose-5-phosphate (DXP) to 2-C-methyl-D-erythritol 4-phosphate (MEP). The chain is 1-deoxy-D-xylulose 5-phosphate reductoisomerase from Campylobacter jejuni subsp. jejuni serotype O:6 (strain 81116 / NCTC 11828).